Reading from the N-terminus, the 307-residue chain is Ribonuclease Z (307 aa).

Zn(2+)-binding residues include His-63, His-65, Asp-67, His-68, His-141, Asp-212, and His-270. Asp-67 (proton acceptor) is an active-site residue.

This sequence belongs to the RNase Z family. Homodimer. Requires Zn(2+) as cofactor.

The catalysed reaction is Endonucleolytic cleavage of RNA, removing extra 3' nucleotides from tRNA precursor, generating 3' termini of tRNAs. A 3'-hydroxy group is left at the tRNA terminus and a 5'-phosphoryl group is left at the trailer molecule.. Functionally, zinc phosphodiesterase, which displays some tRNA 3'-processing endonuclease activity. Probably involved in tRNA maturation, by removing a 3'-trailer from precursor tRNA. This is Ribonuclease Z from Bacillus anthracis (strain A0248).